The sequence spans 262 residues: Ribonuclease 3 (262 aa).

In terms of domain architecture, RNase III spans 18-141 (LATFLKNLDI…LVGAIYEDMG (124 aa)). Glu-59 provides a ligand contact to Mg(2+). Asp-63 is an active-site residue. Mg(2+)-binding residues include Asp-127 and Glu-130. The active site involves Glu-130.

It belongs to the ribonuclease III family. Homodimer. The cofactor is Mg(2+).

It localises to the cytoplasm. It catalyses the reaction Endonucleolytic cleavage to 5'-phosphomonoester.. Digests double-stranded RNA. Involved in the processing of primary rRNA transcript to yield the immediate precursors to the large and small rRNAs (23S and 16S). Processes some mRNAs, and tRNAs when they are encoded in the rRNA operon. Processes pre-crRNA and tracrRNA of type II CRISPR loci if present in the organism. In Mycoplasma genitalium (strain ATCC 33530 / DSM 19775 / NCTC 10195 / G37) (Mycoplasmoides genitalium), this protein is Ribonuclease 3.